We begin with the raw amino-acid sequence, 225 residues long: Techylectin-like protein (225 aa).

A Fibrinogen C-terminal domain is found at 32–225 (CPSPPLPIDC…WTEIKIKDVK (194 aa)). An intrachain disulfide couples cysteine 41 to cysteine 60. Positions 75–77 (RGD) match the Cell attachment site motif. The Ca(2+) site is built by aspartate 164 and threonine 170. A disulfide bond links cysteine 172 and cysteine 185.

Expressed by the venom gland.

It localises to the secreted. Lectin involved in innate immunity. The polypeptide is Techylectin-like protein (Phoneutria nigriventer (Brazilian armed spider)).